The primary structure comprises 210 residues: Frataxin, mitochondrial (210 aa).

A mitochondrion-targeting transit peptide spans 1–41; it reads MWTLGRRAVAGLLASPSPAQAQTLTRVPRPAELAPLCGRRG.

This sequence belongs to the frataxin family. As to quaternary structure, component of the mitochondrial core iron-sulfur cluster (ISC) complex composed of NFS1, LYRM4, NDUFAB1, ISCU, FXN, and FDX2; this complex is a heterohexamer containing two copies of each monomer. Homodimer. Monomer (probable predominant form). Oligomer. Monomers and polymeric aggregates of &gt;1 MDa have been isolated from mitochondria. A small fraction of heterologous overexpressed recombinant frataxin forms high-molecular weight aggregates that incorporate iron. Interacts with LYRM4. Interacts (via ferrous form) with ISCU; the interaction is possible when both are bound to the dimeric form of the cysteine desulfurase complex (NFS1:LYRM4) and the interaction enhances FXN interaction to the dimeric form of the cysteine desulfurase complex (NFS1:LYRM4). Interacts with FECH; one iron-bound FXN monomer seems to interact with a FECH homodimer. Interacts with SDHA and SDHB. Interacts with ACO2; the interaction is dependent on citrate. Interacts with HSPA9. In terms of assembly, interacts with ACO1. Interacts with ISCU (cytoplasmic form). Processed in two steps by mitochondrial processing peptidase (MPP). MPP first cleaves the precursor to intermediate form and subsequently converts the intermediate to yield frataxin mature form (frataxin(81-210)) which is the predominant form. The additional forms, frataxin(56-210) and frataxin(78-210), seem to be produced when the normal maturation process is impaired; their physiological relevance is unsure. In terms of tissue distribution, expressed in the heart, peripheral blood lymphocytes and dermal fibroblasts.

The protein localises to the mitochondrion. It localises to the cytoplasm. Its subcellular location is the cytosol. The catalysed reaction is 4 Fe(2+) + O2 + 4 H(+) = 4 Fe(3+) + 2 H2O. Its function is as follows. Functions as an activator of persulfide transfer to the scaffoding protein ISCU as component of the core iron-sulfur cluster (ISC) assembly complex and participates to the [2Fe-2S] cluster assembly. Accelerates sulfur transfer from NFS1 persulfide intermediate to ISCU and to small thiols such as L-cysteine and glutathione leading to persulfuration of these thiols and ultimately sulfide release. Binds ferrous ion and is released from FXN upon the addition of both L-cysteine and reduced FDX2 during [2Fe-2S] cluster assembly. The core iron-sulfur cluster (ISC) assembly complex is involved in the de novo synthesis of a [2Fe-2S] cluster, the first step of the mitochondrial iron-sulfur protein biogenesis. This process is initiated by the cysteine desulfurase complex (NFS1:LYRM4:NDUFAB1) that produces persulfide which is delivered on the scaffold protein ISCU in a FXN-dependent manner. Then this complex is stabilized by FDX2 which provides reducing equivalents to accomplish the [2Fe-2S] cluster assembly. Finally, the [2Fe-2S] cluster is transferred from ISCU to chaperone proteins, including HSCB, HSPA9 and GLRX5. May play a role in the protection against iron-catalyzed oxidative stress through its ability to catalyze the oxidation of Fe(2+) to Fe(3+); the oligomeric form but not the monomeric form has in vitro ferroxidase activity. May be able to store large amounts of iron in the form of a ferrihydrite mineral by oligomerization; however, the physiological relevance is unsure as reports are conflicting and the function has only been shown using heterologous overexpression systems. May function as an iron chaperone protein that protects the aconitase [4Fe-4S]2+ cluster from disassembly and promotes enzyme reactivation. May play a role as a high affinity iron binding partner for FECH that is capable of both delivering iron to ferrochelatase and mediating the terminal step in mitochondrial heme biosynthesis. Functionally, modulates the RNA-binding activity of ACO1. May be involved in the cytoplasmic iron-sulfur protein biogenesis. May contribute to oxidative stress resistance and overall cell survival. The chain is Frataxin, mitochondrial from Homo sapiens (Human).